We begin with the raw amino-acid sequence, 141 residues long: Aspartate 1-decarboxylase (141 aa).

Catalysis depends on serine 25, which acts as the Schiff-base intermediate with substrate; via pyruvic acid. Serine 25 is subject to Pyruvic acid (Ser). Threonine 57 serves as a coordination point for substrate. The active-site Proton donor is tyrosine 58. Residue 73 to 75 (GAA) participates in substrate binding.

It belongs to the PanD family. Heterooctamer of four alpha and four beta subunits. Pyruvate is required as a cofactor. In terms of processing, is synthesized initially as an inactive proenzyme, which is activated by self-cleavage at a specific serine bond to produce a beta-subunit with a hydroxyl group at its C-terminus and an alpha-subunit with a pyruvoyl group at its N-terminus.

The protein localises to the cytoplasm. The catalysed reaction is L-aspartate + H(+) = beta-alanine + CO2. The protein operates within cofactor biosynthesis; (R)-pantothenate biosynthesis; beta-alanine from L-aspartate: step 1/1. Functionally, catalyzes the pyruvoyl-dependent decarboxylation of aspartate to produce beta-alanine. The sequence is that of Aspartate 1-decarboxylase from Pseudarthrobacter chlorophenolicus (strain ATCC 700700 / DSM 12829 / CIP 107037 / JCM 12360 / KCTC 9906 / NCIMB 13794 / A6) (Arthrobacter chlorophenolicus).